The following is a 165-amino-acid chain: Glutamyl-tRNA(Gln) amidotransferase subunit F, mitochondrial (165 aa).

A mitochondrion-targeting transit peptide spans 1–19 (MKSILRSTTRNLITSSRRF).

This sequence belongs to the GatF family. As to quaternary structure, subunit of the heterotrimeric GatFAB amidotransferase (AdT) complex, composed of A, B and F subunits.

It is found in the mitochondrion inner membrane. It catalyses the reaction L-glutamyl-tRNA(Gln) + L-glutamine + ATP + H2O = L-glutaminyl-tRNA(Gln) + L-glutamate + ADP + phosphate + H(+). In terms of biological role, allows the formation of correctly charged Gln-tRNA(Gln) through the transamidation of misacylated Glu-tRNA(Gln) in the mitochondria. The reaction takes place in the presence of glutamine and ATP through an activated gamma-phospho-Glu-tRNA(Gln). Required for proper protein synthesis within the mitochondrion. This is Glutamyl-tRNA(Gln) amidotransferase subunit F, mitochondrial from Candida albicans (strain SC5314 / ATCC MYA-2876) (Yeast).